Reading from the N-terminus, the 758-residue chain is Spastin (758 aa).

Positions 1-99 (MVRTKNQSSS…PTTCSPRSGH (99 aa)) are disordered. Residues 1–121 (MVRTKNQSSS…KQNLYVVSFP (121 aa)) lie on the Cytoplasmic side of the membrane. Positions 1 to 210 (MVRTKNQSSS…RPIQPLEMAA (210 aa)) are required for localization to punctate cytoplasmic foci. Low complexity-rich tracts occupy residues 8 to 29 (SSSS…SATG), 43 to 58 (RSSS…AGGS), 66 to 76 (SSNRRSPGSSP), and 85 to 95 (TDDLTPTTCSP). Positions 122-142 (IIFLFNVLRSLIYQLFCIFRY) form an intramembrane region, helical. Over 143–758 (LYGASTKVIY…WSQDYGDITI (616 aa)) the chain is Cytoplasmic. Polar residues-rich tracts occupy residues 169-180 (SKEQQQSLNHPS) and 189-198 (QEQQLSNQPQ). The tract at residues 169–221 (SKEQQQSLNHPSELNRDSDGQEQQLSNQPQRFRPIQPLEMAANRPGGGYSPGP) is disordered. The segment at 208-758 (MAANRPGGGY…WSQDYGDITI (551 aa)) is sufficient for interaction with microtubules and microtubule severing. The MIT domain maps to 233–308 (HRRAFEYISK…SMARDRLHFL (76 aa)). Disordered regions lie at residues 353 to 376 (RVRS…GRKL) and 390 to 454 (NKSQ…ASTP). Polar residues-rich tracts occupy residues 390 to 406 (NKSQ…TSVG) and 425 to 454 (QFSS…ASTP). The segment at 443–455 (NNGPSGSGASTPV) is required for interaction with microtubules. 523 to 530 (GPPGNGKT) contacts ATP.

Belongs to the AAA ATPase family. Spastin subfamily. In terms of assembly, homohexamer. The homohexamer is stabilized by ATP-binding. The homohexamer may adopt a ring conformation through which microtubules pass prior to being severed. Interacts with microtubules. Interacts with atl; may be involved in microtubule dynamics.

Its subcellular location is the membrane. The protein resides in the cytoplasm. It is found in the cytoskeleton. The protein localises to the microtubule organizing center. It localises to the centrosome. Its subcellular location is the chromosome. The protein resides in the lipid droplet. It carries out the reaction n ATP + n H2O + a microtubule = n ADP + n phosphate + (n+1) alpha/beta tubulin heterodimers.. Its function is as follows. ATP-dependent microtubule severing protein. Stimulates microtubule minus-end depolymerization and poleward microtubule flux in the mitotic spindle. Regulates microtubule stability in the neuromuscular junction synapse. Involved in lipid metabolism by regulating the size and distribution of lipid droplets. Involved in axon regeneration by regulating microtubule severing. In Drosophila yakuba (Fruit fly), this protein is Spastin.